We begin with the raw amino-acid sequence, 800 residues long: Nuclear cap-binding protein subunit 1 (800 aa).

The disordered stretch occupies residues 1-26 (MSRRRAHDTEDEGYDHRRNKRRRVSE). Position 9 is a phosphothreonine (Thr9). The region spanning 31–243 (EDRLESLILR…CLWAQIRKLR (213 aa)) is the MIF4G domain. The segment at 669-700 (LAKADSSSSDSEDDSSHKRKKPITHADKPSEE) is disordered.

It belongs to the NCBP1 family. Component of the nuclear cap-binding complex (CBC), a heterodimer composed of Cbp80 and Cbp20 that interacts with m7GpppG-capped RNA.

It localises to the nucleus. Component of the cap-binding complex (CBC), which binds cotranscriptionally to the 5'-cap of pre-mRNAs and is involved in various processes such as pre-mRNA splicing and RNA-mediated gene silencing (RNAi). The CBC complex is involved in miRNA-mediated RNA interference via its interaction with Ars2 and is required for primary microRNAs (miRNAs) processing. Also involved in innate immunity via the short interfering RNAs (siRNAs) processing machinery by restricting the viral RNA production. In the CBC complex, Cbp80 does not bind directly capped RNAs (m7GpppG-capped RNA) but is required to stabilize the movement of the N-terminal loop of Cbp20 and lock the CBC into a high affinity cap-binding state with the cap structure. This Drosophila sechellia (Fruit fly) protein is Nuclear cap-binding protein subunit 1 (Cbp80).